A 147-amino-acid polypeptide reads, in one-letter code: Ubiquitin-conjugating enzyme E2 5A (147 aa).

A compositionally biased stretch (basic and acidic residues) spans 1–15; the sequence is MASKRIQKELKDLQK. Residues 1-24 are disordered; sequence MASKRIQKELKDLQKDPPTSCSAG. The region spanning 1 to 147 is the UBC core domain; it reads MASKRIQKEL…ARTWTQRYAM (147 aa). C85 functions as the Glycyl thioester intermediate in the catalytic mechanism.

The protein belongs to the ubiquitin-conjugating enzyme family.

It carries out the reaction S-ubiquitinyl-[E1 ubiquitin-activating enzyme]-L-cysteine + [E2 ubiquitin-conjugating enzyme]-L-cysteine = [E1 ubiquitin-activating enzyme]-L-cysteine + S-ubiquitinyl-[E2 ubiquitin-conjugating enzyme]-L-cysteine.. The protein operates within protein modification; protein ubiquitination. In terms of biological role, E2 conjugating enzyme that associates with the E3 ubiquitin-protein ligase EL5 to mediate ubiquitination of target proteins. The protein is Ubiquitin-conjugating enzyme E2 5A (UBC5A) of Oryza sativa subsp. japonica (Rice).